A 443-amino-acid polypeptide reads, in one-letter code: Trigger factor (443 aa).

Residues 165-250 (GDQVVMDFVG…IKEVKEPVAA (86 aa)) enclose the PPIase FKBP-type domain.

This sequence belongs to the FKBP-type PPIase family. Tig subfamily.

It is found in the cytoplasm. The enzyme catalyses [protein]-peptidylproline (omega=180) = [protein]-peptidylproline (omega=0). Functionally, involved in protein export. Acts as a chaperone by maintaining the newly synthesized protein in an open conformation. Functions as a peptidyl-prolyl cis-trans isomerase. The chain is Trigger factor from Ruegeria pomeroyi (strain ATCC 700808 / DSM 15171 / DSS-3) (Silicibacter pomeroyi).